The chain runs to 465 residues: Kynurenine 3-monooxygenase (465 aa).

The tract at residues 1–26 (MSPGIVSQEVNGRQEPTEAARDERHG) is disordered. Residues 15–25 (EPTEAARDERH) show a composition bias toward basic and acidic residues. The next 2 membrane-spanning stretches (helical) occupy residues 405–427 (LLFR…SMPY) and 440–462 (LLKR…IYAQ).

The protein belongs to the aromatic-ring hydroxylase family. KMO subfamily. Requires FAD as cofactor.

It localises to the mitochondrion. The protein resides in the membrane. It carries out the reaction L-kynurenine + NADPH + O2 + H(+) = 3-hydroxy-L-kynurenine + NADP(+) + H2O. It functions in the pathway cofactor biosynthesis; NAD(+) biosynthesis; quinolinate from L-kynurenine: step 1/3. Catalyzes the hydroxylation of L-kynurenine (L-Kyn) to form 3-hydroxy-L-kynurenine (L-3OHKyn). Required for synthesis of quinolinic acid. This is Kynurenine 3-monooxygenase from Drosophila melanogaster (Fruit fly).